Reading from the N-terminus, the 622-residue chain is Low affinity potassium transport system protein Kup (622 aa).

12 consecutive transmembrane segments (helical) span residues 9–29 (LPAV…TSPL), 52–72 (FLSL…LLFV), 99–119 (TPVL…EVVI), 137–157 (PSLQ…LFFI), 165–185 (VGKL…VLGV), 213–233 (VSFF…ALYA), 247–267 (WFSA…ALLL), 276–296 (PFFL…ATLA), 337–357 (IYIP…IVSF), 363–383 (LAAA…ILSC), 394–414 (LLIV…MFAA), and 419–439 (IFSG…AMIT).

This sequence belongs to the HAK/KUP transporter (TC 2.A.72) family.

It localises to the cell inner membrane. The catalysed reaction is K(+)(in) + H(+)(in) = K(+)(out) + H(+)(out). Responsible for the low-affinity transport of potassium into the cell. Likely operates as a K(+):H(+) symporter. The chain is Low affinity potassium transport system protein Kup from Sodalis glossinidius (strain morsitans).